We begin with the raw amino-acid sequence, 81 residues long: Defensin-like protein 311 (81 aa).

The N-terminal stretch at 1–24 (MEKISAFFVILFLVSSCLVTMSVG) is a signal peptide. 3 cysteine pairs are disulfide-bonded: C27–C50, C33–C57, and C41–C59.

It belongs to the DEFL family.

It is found in the secreted. The chain is Defensin-like protein 311 from Arabidopsis thaliana (Mouse-ear cress).